The following is a 144-amino-acid chain: Large ribosomal subunit protein uL15 (144 aa).

The tract at residues 1 to 53 (MFLNTIKPGEGAKHAKRRVGRGIGSGLGKTAGRGHKGQKSRSGGFHKVGFEGG) is disordered. A compositionally biased stretch (gly residues) spans 21–31 (RGIGSGLGKTA).

This sequence belongs to the universal ribosomal protein uL15 family. In terms of assembly, part of the 50S ribosomal subunit.

Its function is as follows. Binds to the 23S rRNA. The protein is Large ribosomal subunit protein uL15 of Laribacter hongkongensis (strain HLHK9).